Reading from the N-terminus, the 577-residue chain is MRSHFCAEISEKDVGKTIKVAGWCNTYRDHGGVVFIDLRDKSGLVQLVCDPSSKAYEKALEVRSEFVLVAKGKARLRGPGLENPKLKTGKIEIVLEELVIENKSATPPIEIGNKNVNEDLRLKYRYLDLRSLNAYEIFKLRSEVALIARNALAQKGFLEIETPILSKTTPEGARDYLVPSRVHEGEFFALPQSPQLFKQLLMVGGMDRYFQIARCFRDEDLRADRQPEFTQIDAEMSFCSENDVMGVVEDLLQEIFKAIGHNISKPFKRMPYKEAMENYGSDKPDLRFELPLIEVGDCFMDSSNAIFSNIAQDPKNKRIKALNVKGADAIFSRSVLKELEEFVCQFGAQGLAYLQIKEDGVKGPLVKFLSEKGLKNILEKTGAKTGDIVFFGAGDKKIVLDYMGRLRLKVAETLDLIDKDALNFLWVVNFPMFEKTENGYHAAHHPFTMPKNIECKDLEEIEAHAYDVVLNGVELGGGSIRIHKEEMQKKVFEKINIHEEEAQKKFGFLLEALKFGAPPHGGFAIGFDRLIMLMTKSSSIRDVIAFPKTQKASCLLTDAPSPINEEQLRELHIRLRK.

Glutamate 171 provides a ligand contact to L-aspartate. The interval 195 to 198 (QLFK) is aspartate. Arginine 217 is an L-aspartate binding site. ATP contacts are provided by residues 217–219 (RDE) and glutamine 226. Histidine 444 lines the L-aspartate pocket. An ATP-binding site is contributed by glutamate 474. Arginine 481 is a binding site for L-aspartate. An ATP-binding site is contributed by 526 to 529 (GFDR).

The protein belongs to the class-II aminoacyl-tRNA synthetase family. Type 1 subfamily. In terms of assembly, homodimer.

Its subcellular location is the cytoplasm. It catalyses the reaction tRNA(Asx) + L-aspartate + ATP = L-aspartyl-tRNA(Asx) + AMP + diphosphate. In terms of biological role, aspartyl-tRNA synthetase with relaxed tRNA specificity since it is able to aspartylate not only its cognate tRNA(Asp) but also tRNA(Asn). Reaction proceeds in two steps: L-aspartate is first activated by ATP to form Asp-AMP and then transferred to the acceptor end of tRNA(Asp/Asn). The chain is Aspartate--tRNA(Asp/Asn) ligase from Helicobacter pylori (strain Shi470).